The sequence spans 142 residues: Cell division protein SepF (142 aa).

The protein belongs to the SepF family. In terms of assembly, homodimer. Interacts with FtsZ.

The protein resides in the cytoplasm. In terms of biological role, cell division protein that is part of the divisome complex and is recruited early to the Z-ring. Probably stimulates Z-ring formation, perhaps through the cross-linking of FtsZ protofilaments. Its function overlaps with FtsA. The protein is Cell division protein SepF of Syntrophomonas wolfei subsp. wolfei (strain DSM 2245B / Goettingen).